The chain runs to 335 residues: Tetraacyldisaccharide 4'-kinase (335 aa).

58-65 contacts ATP; that stretch reads TVGGSGKT.

Belongs to the LpxK family.

It catalyses the reaction a lipid A disaccharide + ATP = a lipid IVA + ADP + H(+). Its pathway is glycolipid biosynthesis; lipid IV(A) biosynthesis; lipid IV(A) from (3R)-3-hydroxytetradecanoyl-[acyl-carrier-protein] and UDP-N-acetyl-alpha-D-glucosamine: step 6/6. Functionally, transfers the gamma-phosphate of ATP to the 4'-position of a tetraacyldisaccharide 1-phosphate intermediate (termed DS-1-P) to form tetraacyldisaccharide 1,4'-bis-phosphate (lipid IVA). The sequence is that of Tetraacyldisaccharide 4'-kinase from Shewanella sp. (strain ANA-3).